A 565-amino-acid chain; its full sequence is Membrane protein insertase YidC (565 aa).

6 helical membrane-spanning segments follow: residues 6-26 (VLLIFSWLTVATLLWMDWSKN), 348-368 (LMALIGQGLFWILSHLNSLLH), 370-390 (WGWAIVGLVVLLRIAMYPLSA), 437-457 (GGCFPILIQMPIFFALYWVLV), 479-499 (PYFILPLLNIVIMWATQKLTP), and 516-536 (PLIFGVMMAFVPSGLALYWVI).

The protein belongs to the OXA1/ALB3/YidC family. Type 1 subfamily. As to quaternary structure, interacts with the Sec translocase complex via SecD. Specifically interacts with transmembrane segments of nascent integral membrane proteins during membrane integration.

It is found in the cell inner membrane. Required for the insertion and/or proper folding and/or complex formation of integral membrane proteins into the membrane. Involved in integration of membrane proteins that insert both dependently and independently of the Sec translocase complex, as well as at least some lipoproteins. Aids folding of multispanning membrane proteins. This Xylella fastidiosa (strain M23) protein is Membrane protein insertase YidC.